The sequence spans 196 residues: Mediator of RNA polymerase II transcription subunit 21 (196 aa).

Residues 52-111 (KIPKNASTPPVPASAPQAAQSQSQASPPPPDTANPQTGGQHADQQQQSPDGEGLPAPDSP) form a disordered region. 2 stretches are compositionally biased toward low complexity: residues 65–76 (SAPQAAQSQSQA) and 87–98 (QTGGQHADQQQQ). The stretch at 144–174 (SSEAEQERRIRELEGELRIVEGVREERRREL) forms a coiled coil.

Belongs to the Mediator complex subunit 21 family. In terms of assembly, component of the Mediator complex.

It is found in the nucleus. In terms of biological role, component of the Mediator complex, a coactivator involved in the regulated transcription of nearly all RNA polymerase II-dependent genes. Mediator functions as a bridge to convey information from gene-specific regulatory proteins to the basal RNA polymerase II transcription machinery. Mediator is recruited to promoters by direct interactions with regulatory proteins and serves as a scaffold for the assembly of a functional preinitiation complex with RNA polymerase II and the general transcription factors. This chain is Mediator of RNA polymerase II transcription subunit 21 (srb7), found in Aspergillus niger (strain ATCC MYA-4892 / CBS 513.88 / FGSC A1513).